Here is a 220-residue protein sequence, read N- to C-terminus: Probable transaldolase (220 aa).

The active-site Schiff-base intermediate with substrate is the Lys87.

The protein belongs to the transaldolase family. Type 3B subfamily.

The protein resides in the cytoplasm. The enzyme catalyses D-sedoheptulose 7-phosphate + D-glyceraldehyde 3-phosphate = D-erythrose 4-phosphate + beta-D-fructose 6-phosphate. It functions in the pathway carbohydrate degradation; pentose phosphate pathway; D-glyceraldehyde 3-phosphate and beta-D-fructose 6-phosphate from D-ribose 5-phosphate and D-xylulose 5-phosphate (non-oxidative stage): step 2/3. Its function is as follows. Transaldolase is important for the balance of metabolites in the pentose-phosphate pathway. The polypeptide is Probable transaldolase (Porphyromonas gingivalis (strain ATCC 33277 / DSM 20709 / CIP 103683 / JCM 12257 / NCTC 11834 / 2561)).